Reading from the N-terminus, the 1132-residue chain is Rho GTPase-activating protein gacE (1132 aa).

Positions 76-262 constitute a Rho-GAP domain; the sequence is LEMNKILKSE…FLISNYLNVF (187 aa). Disordered regions lie at residues 279 to 354 and 472 to 517; these read NELL…SSPI and NSTT…SLIN. Residues 281–301 show a composition bias toward low complexity; it reads LLNNNNNNNNVIMPTTTTTTT. Positions 302–311 are enriched in polar residues; that stretch reads SASSSILPTD. Low complexity-rich tracts occupy residues 328-354, 473-498, and 507-517; these read SIPL…SSPI, STTT…STTT, and SNSASNNSLIN.

The protein resides in the cytoplasm. Rho GTPase-activating protein involved in the signal transduction pathway. The protein is Rho GTPase-activating protein gacE (gacE) of Dictyostelium discoideum (Social amoeba).